The primary structure comprises 507 residues: ATP synthase subunit alpha, chloroplastic (507 aa).

170–177 (GDRQTGKT) is a binding site for ATP.

Belongs to the ATPase alpha/beta chains family. F-type ATPases have 2 components, CF(1) - the catalytic core - and CF(0) - the membrane proton channel. CF(1) has five subunits: alpha(3), beta(3), gamma(1), delta(1), epsilon(1). CF(0) has four main subunits: a, b, b' and c.

The protein resides in the plastid. It localises to the chloroplast thylakoid membrane. The enzyme catalyses ATP + H2O + 4 H(+)(in) = ADP + phosphate + 5 H(+)(out). Its function is as follows. Produces ATP from ADP in the presence of a proton gradient across the membrane. The alpha chain is a regulatory subunit. The sequence is that of ATP synthase subunit alpha, chloroplastic from Atropa belladonna (Belladonna).